The chain runs to 295 residues: Putative attaching and effacing protein homolog (295 aa).

Residues 1–25 form the signal peptide; it reads MSHYKTGHKQPRFRYSVLARCVAWA.

It belongs to the intimin/invasin family.

In Escherichia coli (strain K12), this protein is Putative attaching and effacing protein homolog (eaeH).